The primary structure comprises 166 residues: Large ribosomal subunit protein uL11z (166 aa).

It belongs to the universal ribosomal protein uL11 family.

Functionally, binds directly to 26S ribosomal RNA. The chain is Large ribosomal subunit protein uL11z (RPL12A) from Arabidopsis thaliana (Mouse-ear cress).